A 108-amino-acid chain; its full sequence is UPF0145 protein ACIAD2946 (108 aa).

The protein belongs to the UPF0145 family.

The chain is UPF0145 protein ACIAD2946 from Acinetobacter baylyi (strain ATCC 33305 / BD413 / ADP1).